Consider the following 285-residue polypeptide: Protease HtpX homolog (285 aa).

2 helical membrane-spanning segments follow: residues 7-27 and 30-50; these read TAML…MIGG and GMTI…WFSD. His-131 contributes to the Zn(2+) binding site. Residue Glu-132 is part of the active site. His-135 serves as a coordination point for Zn(2+). A run of 2 helical transmembrane segments spans residues 146–166 and 177–197; these read ITAT…FFGG and IAGI…QMAI. Position 202 (Glu-202) interacts with Zn(2+).

This sequence belongs to the peptidase M48B family. Zn(2+) is required as a cofactor.

The protein resides in the cell inner membrane. The polypeptide is Protease HtpX homolog (Burkholderia lata (strain ATCC 17760 / DSM 23089 / LMG 22485 / NCIMB 9086 / R18194 / 383)).